Reading from the N-terminus, the 576-residue chain is Cytochrome P450 97B2, chloroplastic (576 aa).

Residues 1–44 (MSVDTSSTLSTVTDANLHSRFHSRLVPFTHHFSLSQPKRISSIR) constitute a chloroplast transit peptide. Cys519 is a heme binding site.

Belongs to the cytochrome P450 family. Heme serves as cofactor.

It is found in the plastid. Its subcellular location is the chloroplast membrane. This Glycine max (Soybean) protein is Cytochrome P450 97B2, chloroplastic (CYP97B2).